A 167-amino-acid polypeptide reads, in one-letter code: Golgin subfamily A member 7B (167 aa).

S-palmitoyl cysteine attachment occurs at residues C78 and C81. The segment at 140-167 (RCSSGSSSSGSSSGSGSSSAGGGGAGAR) is disordered. The span at 142–157 (SSGSSSSGSSSGSGSS) shows a compositional bias: low complexity. Residues 158-167 (SAGGGGAGAR) are compositionally biased toward gly residues.

The protein belongs to the ERF4 family. Palmitoylated by ZDHHC5. Palmitoylation is required for the maintenance of ZDHHC5 at the plasma membrane.

It is found in the cell membrane. The protein localises to the golgi apparatus membrane. Functionally, play a role in cell adhesion by regulating the plasma membrane localization of the palmitoyltransferase ZDHHC5. May be involved in protein transport from Golgi to cell surface. The chain is Golgin subfamily A member 7B (GOLGA7B) from Mus musculus (Mouse).